A 666-amino-acid polypeptide reads, in one-letter code: Transketolase (666 aa).

His28 serves as a coordination point for substrate. Residues His68 and 116 to 118 (GPL) contribute to the thiamine diphosphate site. Asp157 serves as a coordination point for Mg(2+). Thiamine diphosphate contacts are provided by Gly158 and Asn187. The Mg(2+) site is built by Asn187 and Ile189. Substrate-binding residues include His262, Arg356, and Ser383. Residue His262 coordinates thiamine diphosphate. Glu410 acts as the Proton donor in catalysis. Phe436 is a thiamine diphosphate binding site. Substrate contacts are provided by His460, Asp468, and Arg519.

It belongs to the transketolase family. As to quaternary structure, homodimer. It depends on Mg(2+) as a cofactor. Ca(2+) serves as cofactor. Requires Mn(2+) as cofactor. Co(2+) is required as a cofactor. The cofactor is thiamine diphosphate.

It catalyses the reaction D-sedoheptulose 7-phosphate + D-glyceraldehyde 3-phosphate = aldehydo-D-ribose 5-phosphate + D-xylulose 5-phosphate. In terms of biological role, catalyzes the transfer of a two-carbon ketol group from a ketose donor to an aldose acceptor, via a covalent intermediate with the cofactor thiamine pyrophosphate. In Halalkalibacterium halodurans (strain ATCC BAA-125 / DSM 18197 / FERM 7344 / JCM 9153 / C-125) (Bacillus halodurans), this protein is Transketolase (tkt).